A 701-amino-acid chain; its full sequence is Polyribonucleotide nucleotidyltransferase (701 aa).

Positions 487 and 493 each coordinate Mg(2+). In terms of domain architecture, KH spans 554-613 (PTMIAMKIDTDKIRDVIGKGGATIRAICEETKASIDIEDDGSIKIFGESKEAAEAARQRV). Residues 623–691 (GKIYVGKVER…NRGRIKLSIK (69 aa)) enclose the S1 motif domain.

It belongs to the polyribonucleotide nucleotidyltransferase family. As to quaternary structure, component of the RNA degradosome, which is a multiprotein complex involved in RNA processing and mRNA degradation. Mg(2+) is required as a cofactor.

The protein localises to the cytoplasm. It catalyses the reaction RNA(n+1) + phosphate = RNA(n) + a ribonucleoside 5'-diphosphate. In terms of biological role, involved in mRNA degradation. Catalyzes the phosphorolysis of single-stranded polyribonucleotides processively in the 3'- to 5'-direction. This is Polyribonucleotide nucleotidyltransferase from Pseudomonas savastanoi pv. phaseolicola (strain 1448A / Race 6) (Pseudomonas syringae pv. phaseolicola (strain 1448A / Race 6)).